Consider the following 71-residue polypeptide: Translational regulator CsrA (71 aa).

A disordered region spans residues 50–71 (RIRHEKDGDVPEAAPGQGADPQ).

This sequence belongs to the CsrA/RsmA family. Homodimer; the beta-strands of each monomer intercalate to form a hydrophobic core, while the alpha-helices form wings that extend away from the core.

The protein localises to the cytoplasm. Its function is as follows. A key translational regulator that binds mRNA to regulate translation initiation and/or mRNA stability. Mediates global changes in gene expression, shifting from rapid growth to stress survival by linking envelope stress, the stringent response and the catabolite repression systems. Usually binds in the 5'-UTR; binding at or near the Shine-Dalgarno sequence prevents ribosome-binding, repressing translation, binding elsewhere in the 5'-UTR can activate translation and/or stabilize the mRNA. Its function is antagonized by small RNA(s). The chain is Translational regulator CsrA from Halorhodospira halophila (strain DSM 244 / SL1) (Ectothiorhodospira halophila (strain DSM 244 / SL1)).